Consider the following 292-residue polypeptide: NAD kinase (292 aa).

The Proton acceptor role is filled by Asp-73. NAD(+) contacts are provided by residues Asp-73–Gly-74, Asn-147–Glu-148, His-158, Arg-175, Asp-177, Thr-188–Ser-193, and Gln-247.

It belongs to the NAD kinase family. It depends on a divalent metal cation as a cofactor.

It is found in the cytoplasm. It carries out the reaction NAD(+) + ATP = ADP + NADP(+) + H(+). In terms of biological role, involved in the regulation of the intracellular balance of NAD and NADP, and is a key enzyme in the biosynthesis of NADP. Catalyzes specifically the phosphorylation on 2'-hydroxyl of the adenosine moiety of NAD to yield NADP. This is NAD kinase from Klebsiella pneumoniae subsp. pneumoniae (strain ATCC 700721 / MGH 78578).